Here is a 240-residue protein sequence, read N- to C-terminus: MRTEAEAAGPPLEPGDFVQLPVPVIQQLYHWDCGLACSRMVLRYLGQLDDSEFERALQKLQLTRSIWTIDLAYLMHHFGVRHRFCTQTLGVDKGYKNQSFYRKHFDTEETRVNQLFAQAKACKVLVEKCTVSVKDIQAHLAQGHVAIVLVNSGVLHCDLCSSPVKYCCFTPSGHHCFCRTPDYQGHFIVLRGYNRATGCIFYNNPAYADPGMCSTSISNFEEARTSYGTDEDILFVYLDS.

The sequence is that of Protein GUCD1 (GUCD1) from Homo sapiens (Human).